The following is a 179-amino-acid chain: Ribosome maturation factor RimP (179 aa).

Belongs to the RimP family.

It is found in the cytoplasm. Functionally, required for maturation of 30S ribosomal subunits. This is Ribosome maturation factor RimP from Prosthecochloris aestuarii (strain DSM 271 / SK 413).